A 395-amino-acid chain; its full sequence is Tyrosine--tRNA ligase (395 aa).

The short motif at 42–51 (PTAPDIHLGH) is the 'HIGH' region element. The short motif at 226–230 (KMSKS) is the 'KMSKS' region element. Position 229 (K229) interacts with ATP. Positions 334 to 394 (IGLATLLKEA…GKRKFARVTV (61 aa)) constitute an S4 RNA-binding domain.

Belongs to the class-I aminoacyl-tRNA synthetase family. TyrS type 2 subfamily. In terms of assembly, homodimer.

Its subcellular location is the cytoplasm. It catalyses the reaction tRNA(Tyr) + L-tyrosine + ATP = L-tyrosyl-tRNA(Tyr) + AMP + diphosphate + H(+). In terms of biological role, catalyzes the attachment of tyrosine to tRNA(Tyr) in a two-step reaction: tyrosine is first activated by ATP to form Tyr-AMP and then transferred to the acceptor end of tRNA(Tyr). The chain is Tyrosine--tRNA ligase from Haemophilus influenzae (strain 86-028NP).